The following is a 152-amino-acid chain: Small ribosomal subunit protein uS13 (152 aa).

A Phosphoserine modification is found at Ser-41.

Belongs to the universal ribosomal protein uS13 family.

The protein localises to the cytoplasm. Functionally, located at the top of the head of the 40S subunit, it contacts several helices of the 18S rRNA. The polypeptide is Small ribosomal subunit protein uS13 (RpS18) (Drosophila melanogaster (Fruit fly)).